A 209-amino-acid chain; its full sequence is Holliday junction branch migration complex subunit RuvA (209 aa).

The domain I stretch occupies residues 1-70 (MINYLRGQAI…EEQPLLYGFG (70 aa)). Residues 71–149 (TAPERELFRQ…AWRQLREATT (79 aa)) are domain II. A flexible linker region spans residues 150–158 (TITAILPAA). The domain III stretch occupies residues 158–209 (AAILEDVQMTLLALGYSQEEIDRAMAVLSQDALFSKNTQPEDWIKGAINWLG).

It belongs to the RuvA family. In terms of assembly, homotetramer. Forms an RuvA(8)-RuvB(12)-Holliday junction (HJ) complex. HJ DNA is sandwiched between 2 RuvA tetramers; dsDNA enters through RuvA and exits via RuvB. An RuvB hexamer assembles on each DNA strand where it exits the tetramer. Each RuvB hexamer is contacted by two RuvA subunits (via domain III) on 2 adjacent RuvB subunits; this complex drives branch migration. In the full resolvosome a probable DNA-RuvA(4)-RuvB(12)-RuvC(2) complex forms which resolves the HJ.

It localises to the cytoplasm. The RuvA-RuvB-RuvC complex processes Holliday junction (HJ) DNA during genetic recombination and DNA repair, while the RuvA-RuvB complex plays an important role in the rescue of blocked DNA replication forks via replication fork reversal (RFR). RuvA specifically binds to HJ cruciform DNA, conferring on it an open structure. The RuvB hexamer acts as an ATP-dependent pump, pulling dsDNA into and through the RuvAB complex. HJ branch migration allows RuvC to scan DNA until it finds its consensus sequence, where it cleaves and resolves the cruciform DNA. In Microcystis aeruginosa (strain NIES-843 / IAM M-2473), this protein is Holliday junction branch migration complex subunit RuvA.